A 70-amino-acid chain; its full sequence is DNA-directed RNA polymerase subunit epsilon (70 aa).

It belongs to the RNA polymerase subunit epsilon family. In terms of assembly, RNAP is composed of a core of 2 alpha, a beta and a beta' subunit. The core is associated with a delta subunit, and at least one of epsilon or omega. When a sigma factor is associated with the core the holoenzyme is formed, which can initiate transcription.

The enzyme catalyses RNA(n) + a ribonucleoside 5'-triphosphate = RNA(n+1) + diphosphate. Its function is as follows. A non-essential component of RNA polymerase (RNAP). In Leuconostoc mesenteroides subsp. mesenteroides (strain ATCC 8293 / DSM 20343 / BCRC 11652 / CCM 1803 / JCM 6124 / NCDO 523 / NBRC 100496 / NCIMB 8023 / NCTC 12954 / NRRL B-1118 / 37Y), this protein is DNA-directed RNA polymerase subunit epsilon.